The primary structure comprises 490 residues: MALQFTLNQDAPASAAVDCIVVGAFADKTLSPAAQALDSASQGRLTALLARGDVAGKTGSTTLLHDLPGVAAPRVLVVGLGDAGKFGVAPYLKAIGDATRALKTGAVGTALLTLTELTVKARDAAWNIRQAVTVSDHAAYRYTATLGKKKVDETGLTTLAIAGDDARALAVGVATAEGVEFARELGNLPPNYCTPAYLADTAAAFAGKFPGAEAEILDEAQMEALGMGSLLSVARGSANRPRLIVLKWNGGGDARPYVLVGKGITFDTGGVNLKTQGGIEEMKYDMCGGATVIGTFVATVKAELPINLVVVVPAVENAIDGNAYRPSDVITSMSGKTIEVGNTDAEGRLILCDALTYAERFNPEALVDVATLTGACMVALGHQTAGLMSKHDDLANELLAAGEHVFDRAWRLPLWDEYQGLLDSTFADVYNIGGRWGGAITAGCFLSRFTENQRWAHLDIAGVASDEGKRGMATGRPVGLLTQWLLDRAA.

Mn(2+)-binding residues include lysine 262 and aspartate 267. Lysine 274 is an active-site residue. Residues aspartate 285, aspartate 344, and glutamate 346 each coordinate Mn(2+). Arginine 348 is a catalytic residue.

Belongs to the peptidase M17 family. Mn(2+) serves as cofactor.

The protein resides in the cytoplasm. The catalysed reaction is Release of an N-terminal amino acid, Xaa-|-Yaa-, in which Xaa is preferably Leu, but may be other amino acids including Pro although not Arg or Lys, and Yaa may be Pro. Amino acid amides and methyl esters are also readily hydrolyzed, but rates on arylamides are exceedingly low.. It carries out the reaction Release of an N-terminal amino acid, preferentially leucine, but not glutamic or aspartic acids.. Presumably involved in the processing and regular turnover of intracellular proteins. Catalyzes the removal of unsubstituted N-terminal amino acids from various peptides. The chain is Probable cytosol aminopeptidase from Xanthomonas oryzae pv. oryzae (strain MAFF 311018).